The sequence spans 455 residues: Argininosuccinate lyase (455 aa).

The protein belongs to the lyase 1 family. Argininosuccinate lyase subfamily.

Its subcellular location is the cytoplasm. The enzyme catalyses 2-(N(omega)-L-arginino)succinate = fumarate + L-arginine. Its pathway is amino-acid biosynthesis; L-arginine biosynthesis; L-arginine from L-ornithine and carbamoyl phosphate: step 3/3. This is Argininosuccinate lyase from Shewanella oneidensis (strain ATCC 700550 / JCM 31522 / CIP 106686 / LMG 19005 / NCIMB 14063 / MR-1).